The sequence spans 1430 residues: rRNA biogenesis protein RRP5 (1430 aa).

S1 motif domains are found at residues aspartate 74 to lysine 160, glycine 176 to valine 238, glycine 261 to asparagine 329, glycine 447 to arginine 511, glycine 531 to proline 592, and glutamine 697 to lysine 771. Residues lysine 1041–lysine 1145 are disordered. Residues threonine 1043–threonine 1053 are compositionally biased toward polar residues. Basic and acidic residues-rich tracts occupy residues valine 1057 to threonine 1082 and serine 1135 to lysine 1145. The stretch at leucine 1119 to asparagine 1157 forms a coiled coil. HAT repeat units follow at residues lysine 1161–serine 1193, threonine 1195–valine 1232, lysine 1265–tryptophan 1297, glycine 1299–lysine 1333, aspartate 1335–lysine 1367, and glycine 1369–asparagine 1404.

Its subcellular location is the nucleus. The protein resides in the nucleolus. Involved in rRNA processing or maturation during ribosome biogenesis. This is rRNA biogenesis protein RRP5 from Drosophila melanogaster (Fruit fly).